Here is a 101-residue protein sequence, read N- to C-terminus: Small ribosomal subunit protein uS14 (101 aa).

It belongs to the universal ribosomal protein uS14 family. As to quaternary structure, part of the 30S ribosomal subunit. Contacts proteins S3 and S10.

Functionally, binds 16S rRNA, required for the assembly of 30S particles and may also be responsible for determining the conformation of the 16S rRNA at the A site. This chain is Small ribosomal subunit protein uS14, found in Rhizobium johnstonii (strain DSM 114642 / LMG 32736 / 3841) (Rhizobium leguminosarum bv. viciae).